A 341-amino-acid chain; its full sequence is DnaJ homolog subfamily C member 22 (341 aa).

The region spanning 4 to 50 (GLLMTYALWAFGGPVGLHHLYLGRDSHALLWMLTLGGGGLGWLWEFW) is the TM2 domain. The next 7 helical transmembrane spans lie at 5–25 (LLMT…HLYL), 30–50 (HALL…WEFW), 81–101 (FASQ…SLSS), 105–125 (FYIV…AAVG), 135–155 (LGAA…ILPI), 185–205 (VGLA…YNTA), and 232–252 (VESV…APGF). Positions 277 to 341 (LAHQVLGIPE…QPKKPRASWR (65 aa)) constitute a J domain.

Its subcellular location is the membrane. Its function is as follows. May function as a co-chaperone. This Rattus norvegicus (Rat) protein is DnaJ homolog subfamily C member 22 (Dnajc22).